The primary structure comprises 356 residues: Phosphate acyltransferase (356 aa).

It belongs to the PlsX family. As to quaternary structure, homodimer. Probably interacts with PlsY.

It localises to the cytoplasm. The catalysed reaction is a fatty acyl-[ACP] + phosphate = an acyl phosphate + holo-[ACP]. It participates in lipid metabolism; phospholipid metabolism. Catalyzes the reversible formation of acyl-phosphate (acyl-PO(4)) from acyl-[acyl-carrier-protein] (acyl-ACP). This enzyme utilizes acyl-ACP as fatty acyl donor, but not acyl-CoA. This is Phosphate acyltransferase from Shigella boydii serotype 4 (strain Sb227).